The chain runs to 1235 residues: ATP-dependent helicase/nuclease subunit A (1235 aa).

One can recognise a UvrD-like helicase ATP-binding domain in the interval Ala12 to Arg482. Ala33–Thr40 is a binding site for ATP. The UvrD-like helicase C-terminal domain maps to Ala509–Gly800.

It belongs to the helicase family. AddA subfamily. As to quaternary structure, heterodimer of AddA and AddB/RexB. It depends on Mg(2+) as a cofactor.

The enzyme catalyses Couples ATP hydrolysis with the unwinding of duplex DNA by translocating in the 3'-5' direction.. It carries out the reaction ATP + H2O = ADP + phosphate + H(+). Its function is as follows. The heterodimer acts as both an ATP-dependent DNA helicase and an ATP-dependent, dual-direction single-stranded exonuclease. Recognizes the chi site generating a DNA molecule suitable for the initiation of homologous recombination. The AddA nuclease domain is required for chi fragment generation; this subunit has the helicase and 3' -&gt; 5' nuclease activities. In Listeria innocua serovar 6a (strain ATCC BAA-680 / CLIP 11262), this protein is ATP-dependent helicase/nuclease subunit A.